The sequence spans 132 residues: Small ribosomal subunit protein uS8c (132 aa).

The protein belongs to the universal ribosomal protein uS8 family. As to quaternary structure, part of the 30S ribosomal subunit.

It is found in the plastid. The protein localises to the chloroplast. Its function is as follows. One of the primary rRNA binding proteins, it binds directly to 16S rRNA central domain where it helps coordinate assembly of the platform of the 30S subunit. The polypeptide is Small ribosomal subunit protein uS8c (rps8) (Buxus microphylla (Littleleaf boxwood)).